The following is a 141-amino-acid chain: MSFVSKLLYTVSALVLFHSGFSSYEFHHLLKLNSLNNAQGAISKLPKDIMYETYAGLILFVLAVFTSFEKLQYLPIESNDGKIISQGNYLKEIALNKATNVDNLIGSNPNGEIIFTPSFVDVHMKRKICREWASNTVKKEK.

The Cytoplasmic segment spans residues 1–6 (MSFVSK). The helical transmembrane segment at 7–27 (LLYTVSALVLFHSGFSSYEFH) threads the bilayer. At 28 to 48 (HLLKLNSLNNAQGAISKLPKD) the chain is on the lumenal side. The chain crosses the membrane as a helical span at residues 49-69 (IMYETYAGLILFVLAVFTSFE). Over 70–141 (KLQYLPIESN…WASNTVKKEK (72 aa)) the chain is Cytoplasmic.

Belongs to the membrane magnesium transporter (TC 1.A.67) family. As to quaternary structure, component of the ER membrane protein complex (EMC), which is composed of EMC1, EMC2, EMC3, EMC4, EMC5 and EMC6.

The protein resides in the endoplasmic reticulum membrane. Its function is as follows. Part of the endoplasmic reticulum membrane protein complex (EMC) that enables the energy-independent insertion into endoplasmic reticulum membranes of newly synthesized membrane proteins. Preferentially accommodates proteins with transmembrane domains that are weakly hydrophobic or contain destabilizing features such as charged and aromatic residues. Involved in the cotranslational insertion of multi-pass membrane proteins in which stop-transfer membrane-anchor sequences become ER membrane spanning helices. It is also required for the post-translational insertion of tail-anchored/TA proteins in endoplasmic reticulum membranes. By mediating the proper cotranslational insertion of N-terminal transmembrane domains in an N-exo topology, with translocated N-terminus in the lumen of the ER, controls the topology of multi-pass membrane proteins. The protein is ER membrane protein complex subunit 5 (EMC5) of Saccharomyces cerevisiae (strain ATCC 204508 / S288c) (Baker's yeast).